The following is a 147-amino-acid chain: Hemoglobin subunit beta-2 (147 aa).

N-acetylvaline is present on Val-2. Positions 3–147 (HLTDAEKATV…VASALAHKYH (145 aa)) constitute a Globin domain. Ser-13 is modified (phosphoserine). Lys-18 is subject to N6-succinyllysine. Residues Ser-51 and Ser-53 each carry the phosphoserine modification. Heme b is bound by residues His-64 and His-93. Arg-105 is modified (asymmetric dimethylarginine). Thr-124 carries the phosphothreonine modification. Cys-126 is subject to Phosphoserine; in variant Ser-126.

Belongs to the globin family. In terms of assembly, heterotetramer of two alpha chains and two beta chains. Red blood cells.

In terms of biological role, involved in oxygen transport from the lung to the various peripheral tissues. The polypeptide is Hemoglobin subunit beta-2 (Rattus norvegicus (Rat)).